The primary structure comprises 273 residues: Large ribosomal subunit protein uL2 (273 aa).

The disordered stretch occupies residues 221–263 (RGTAMNPVDHPHGGGEGRNFGKHPVTPWGVQTKGKKTRHNKRT). A compositionally biased stretch (basic residues) spans 253–263 (KGKKTRHNKRT).

It belongs to the universal ribosomal protein uL2 family. As to quaternary structure, part of the 50S ribosomal subunit. Forms a bridge to the 30S subunit in the 70S ribosome.

Functionally, one of the primary rRNA binding proteins. Required for association of the 30S and 50S subunits to form the 70S ribosome, for tRNA binding and peptide bond formation. It has been suggested to have peptidyltransferase activity; this is somewhat controversial. Makes several contacts with the 16S rRNA in the 70S ribosome. This Actinobacillus succinogenes (strain ATCC 55618 / DSM 22257 / CCUG 43843 / 130Z) protein is Large ribosomal subunit protein uL2.